The primary structure comprises 190 residues: Probable calcium-binding protein CML27 (190 aa).

3 consecutive EF-hand domains span residues 27–62, 115–150, and 153–188; these read LNAL…LGLG, DDEG…LGLP, and RNLA…ITVW. Ca(2+) contacts are provided by D40, N42, D44, E46, E51, D128, D130, D132, E139, D166, D168, D170, R172, and E177.

In terms of biological role, potential calcium sensor. This is Probable calcium-binding protein CML27 (CML27) from Oryza sativa subsp. japonica (Rice).